Here is a 178-residue protein sequence, read N- to C-terminus: ATP synthase subunit b, chloroplastic (178 aa).

Residues 23–43 (IFETNIINLAAVVAIVISFVG) traverse the membrane as a helical segment.

It belongs to the ATPase B chain family. As to quaternary structure, F-type ATPases have 2 components, F(1) - the catalytic core - and F(0) - the membrane proton channel. F(1) has five subunits: alpha(3), beta(3), gamma(1), delta(1), epsilon(1). F(0) has four main subunits: a(1), b(1), b'(1) and c(10-14). The alpha and beta chains form an alternating ring which encloses part of the gamma chain. F(1) is attached to F(0) by a central stalk formed by the gamma and epsilon chains, while a peripheral stalk is formed by the delta, b and b' chains.

It localises to the plastid. Its subcellular location is the chloroplast thylakoid membrane. Functionally, f(1)F(0) ATP synthase produces ATP from ADP in the presence of a proton or sodium gradient. F-type ATPases consist of two structural domains, F(1) containing the extramembraneous catalytic core and F(0) containing the membrane proton channel, linked together by a central stalk and a peripheral stalk. During catalysis, ATP synthesis in the catalytic domain of F(1) is coupled via a rotary mechanism of the central stalk subunits to proton translocation. Component of the F(0) channel, it forms part of the peripheral stalk, linking F(1) to F(0). In Tetradesmus obliquus (Green alga), this protein is ATP synthase subunit b, chloroplastic.